Here is a 110-residue protein sequence, read N- to C-terminus: Hydrogenase maturation factor HypA (110 aa).

His2 is a Ni(2+) binding site. Zn(2+) is bound by residues Cys70, Cys73, Cys86, and Cys89.

This sequence belongs to the HypA/HybF family.

Involved in the maturation of [NiFe] hydrogenases. Required for nickel insertion into the metal center of the hydrogenase. This chain is Hydrogenase maturation factor HypA, found in Geobacter sulfurreducens (strain ATCC 51573 / DSM 12127 / PCA).